Reading from the N-terminus, the 206-residue chain is LexA repressor (206 aa).

A DNA-binding region (H-T-H motif) is located at residues 28-48 (VREIGEAVGLASSSTVHGHLA). Catalysis depends on for autocatalytic cleavage activity residues S128 and K166.

Belongs to the peptidase S24 family. Homodimer.

The enzyme catalyses Hydrolysis of Ala-|-Gly bond in repressor LexA.. Its function is as follows. Represses a number of genes involved in the response to DNA damage (SOS response), including recA and lexA. In the presence of single-stranded DNA, RecA interacts with LexA causing an autocatalytic cleavage which disrupts the DNA-binding part of LexA, leading to derepression of the SOS regulon and eventually DNA repair. The protein is LexA repressor of Bacillus velezensis (strain DSM 23117 / BGSC 10A6 / LMG 26770 / FZB42) (Bacillus amyloliquefaciens subsp. plantarum).